A 283-amino-acid polypeptide reads, in one-letter code: Movement protein (283 aa).

It belongs to the cucumovirus movement protein family.

The protein resides in the host cell junction. It localises to the host plasmodesma. In terms of biological role, transports viral genome to neighboring plant cells directly through plasmosdesmata, without any budding. The movement protein allows efficient cell to cell propagation, by bypassing the host cell wall barrier. Acts by forming a tubular structure at the host plasmodesmata, enlarging it enough to allow free passage of virion capsids. This chain is Movement protein, found in Cucumis sativus (Cucumber).